The chain runs to 186 residues: Large ribosomal subunit protein bL12c (186 aa).

Over residues 1-11 (MASTLSTITLR) the composition is skewed to polar residues. Residues 1–24 (MASTLSTITLRSPSPSTATSTHAS) are disordered. Residues 1 to 53 (MASTLSTITLRSPSPSTATSTHASIPFPKKTLEFPIRTPKLQNRRATFLRPLA) constitute a chloroplast transit peptide. Over residues 12–24 (SPSPSTATSTHAS) the composition is skewed to low complexity.

It belongs to the bacterial ribosomal protein bL12 family.

It localises to the plastid. It is found in the chloroplast. The polypeptide is Large ribosomal subunit protein bL12c (Nicotiana sylvestris (Wood tobacco)).